We begin with the raw amino-acid sequence, 279 residues long: Complement component 1 Q subcomponent-binding protein, mitochondrial (279 aa).

The N-terminal 71 residues, 1-71 (MLPLLRCVPR…PVPCACGCGA (71 aa)), are a transit peptide targeting the mitochondrion. The C1q binding stretch occupies residues 74–91 (TEGDKAFVEFLTDEIKEE). N6-acetyllysine occurs at positions 89 and 92. The segment at 134-162 (NNSIPPTFDGEEEPSQGQKAEEQEPELTS) is disordered. An interaction with MAVS region spans residues 166–210 (FVVEVTKTDGKKTLVLDCHYPEDEIGHEDEAESDIFSIKEVSFQT). A Phosphotyrosine modification is found at Y185. S198 and S202 each carry phosphoserine. The residue at position 211 (T211) is a Phosphothreonine.

The protein belongs to the MAM33 family. Homotrimer; three monomers form a donut-shaped structure with an unusually asymmetric charge distribution on the surface. Interacts with CDK13, HRK, VTN, NFYB, ADRA1B, FOXC1, DDX21, DDX50, NCL, SRSF1 and SRSF9. Interacts with CD93; the association may represent a cell surface C1q receptor. Interacts with KRT1; the association represents a cell surface kininogen receptor. Interacts with CD209; the interaction is indicative for a C1q:C1QBP:CD209 signaling complex. Interacts with FBL and RRP1; the respective interactions with C1QBP are competitive. Probably associates with the mitoribosome. Interacts with MAVS; the interaction occurs upon viral transfection. Interacts with PPIF. Interacts with U2AF1L4. Interacts with PLEKHN1. Interacts with VGF-derived peptide TLQP-21. Interacts with MRE11 and RAD50; forming the MRC (MRE11-RAD50-C1QBP) complex that inhibits the activity of MRE11. In terms of tissue distribution, ubiquitous.

Its subcellular location is the mitochondrion matrix. The protein localises to the nucleus. It is found in the cell membrane. It localises to the secreted. The protein resides in the cytoplasm. Its subcellular location is the nucleolus. In terms of biological role, multifunctional and multicompartmental protein involved in inflammation and infection processes, ribosome biogenesis, protein synthesis in mitochondria, regulation of apoptosis, transcriptional regulation and pre-mRNA splicing. At the cell surface is thought to act as an endothelial receptor for plasma proteins of the complement and kallikrein-kinin cascades. Putative receptor for C1q; specifically binds to the globular 'heads' of C1q thus inhibiting C1; may perform the receptor function through a complex with C1qR/CD93. In complex with cytokeratin-1/KRT1 is a high affinity receptor for kininogen-1/HMWK. Can also bind other plasma proteins, such as coagulation factor XII leading to its autoactivation. May function to bind initially fluid kininogen-1 to the cell membrane. The secreted form may enhance both extrinsic and intrinsic coagulation pathways. It is postulated that the cell surface form requires docking with transmembrane proteins for downstream signaling which might be specific for a cell-type or response. By acting as C1q receptor is involved in chemotaxis of immature dendritic cells and neutrophils and is proposed to signal through CD209/DC-SIGN on immature dendritic cells, through integrin alpha-4/beta-1 during trophoblast invasion of the decidua, and through integrin beta-1 during endothelial cell adhesion and spreading. Signaling involved in inhibition of innate immune response is implicating the PI3K-AKT/PKB pathway. Required for protein synthesis in mitochondria. In mitochondrial translation may be involved in formation of functional 55S mitoribosomes; the function seems to involve its RNA-binding activity. Acts as a RNA modification reader, which specifically recognizes and binds mitochondrial RNAs modified by C5-methylcytosine (m5C) in response to stress, and promotes recruitment of the mitochondrial degradosome complex, leading to their degradation. May be involved in the nucleolar ribosome maturation process; the function may involve the exchange of FBL for RRP1 in the association with pre-ribosome particles. Involved in regulation of RNA splicing by inhibiting the RNA-binding capacity of SRSF1 and its phosphorylation. Is required for the nuclear translocation of splicing factor U2AF1L4. Involved in regulation of CDKN2A- and HRK-mediated apoptosis. Stabilizes mitochondrial CDKN2A isoform smARF. May be involved in regulation of FOXC1 transcriptional activity and NFY/CCAAT-binding factor complex-mediated transcription. May play a role in antibacterial defense as it can bind to cell surface hyaluronan and inhibit Streptococcus pneumoniae hyaluronate lyase. May be involved in modulation of the immune response; ligation by HCV core protein is resulting in suppression of interleukin-12 production in monocyte-derived dendritic cells. Involved in regulation of antiviral response by inhibiting RIGI- and IFIH1-mediated signaling pathways probably involving its association with MAVS after viral infection. Acts as a regulator of DNA repair via homologous recombination by inhibiting the activity of MRE11: interacts with unphosphorylated MRE11 and RAD50 in absence of DNA damage, preventing formation and activity of the MRN complex. Following DNA damage, dissociates from phosphorylated MRE11, allowing formation of the MRN complex. This Rattus norvegicus (Rat) protein is Complement component 1 Q subcomponent-binding protein, mitochondrial (C1qbp).